We begin with the raw amino-acid sequence, 72 residues long: Putative transmembrane protein DDB_G0272126 (72 aa).

Helical transmembrane passes span 6–26 (KIIK…NTII) and 38–58 (IILV…IFYG).

It localises to the membrane. This chain is Putative transmembrane protein DDB_G0272126, found in Dictyostelium discoideum (Social amoeba).